A 156-amino-acid chain; its full sequence is Protein OXIDATIVE STRESS 3 LIKE 3 (156 aa).

Positions 1–67 are disordered; sequence MHYQEQMESL…GLSKHYKGKS (67 aa). Basic and acidic residues predominate over residues 13-26; it reads GEERRRGNYTRDVD.

The protein resides in the nucleus. Promotes slightly the tolerance to oxidizing chemicals (e.g. diamide). The chain is Protein OXIDATIVE STRESS 3 LIKE 3 from Arabidopsis thaliana (Mouse-ear cress).